We begin with the raw amino-acid sequence, 636 residues long: Alpha-L-iduronidase (636 aa).

The N-terminal stretch at 1–16 (MLSLLLVLTTLARIHA) is a signal peptide. Residues Pro-39, Ile-43, and His-45 each coordinate alpha-D-mannopyranose. Residues His-78, Asn-169, and Glu-170 each coordinate alpha-L-iduronate. Glu-170 serves as the catalytic Proton donor. Residue Asn-180 is glycosylated (N-linked (GlcNAc...) asparagine). Residue Lys-257 participates in alpha-L-iduronate binding. The N-linked (GlcNAc...) asparagine glycan is linked to Asn-268. 2 residues coordinate alpha-L-iduronate: Glu-293 and Gly-299. The Nucleophile role is filled by Glu-293. Position 300 (Trp-300) interacts with alpha-D-mannopyranose. The alpha-L-iduronate site is built by Asp-342 and Arg-356. N-linked (GlcNAc...) asparagine glycosylation is found at Asn-365, Asn-448, Asn-453, and Asn-483. A disulfide bridge links Cys-529 with Cys-565. Asn-622 carries N-linked (GlcNAc...) asparagine glycosylation.

This sequence belongs to the glycosyl hydrolase 39 family.

The protein resides in the lysosome. The catalysed reaction is Hydrolysis of unsulfated alpha-L-iduronosidic linkages in dermatan sulfate.. Its function is as follows. Essential lysosomal hydrolase responsible for the degradation of glycosaminoglycans (GAG) such as heparan sulfate. Required for lysosome function and autophagy. Consequently, has an essential role in the development, maintenance and function of various cells, tissues, and organs, including the muscles and the central nervous system (CNS). The sequence is that of Alpha-L-iduronidase from Drosophila melanogaster (Fruit fly).